Consider the following 131-residue polypeptide: Small ribosomal subunit protein uS11 (131 aa).

This sequence belongs to the universal ribosomal protein uS11 family. In terms of assembly, part of the 30S ribosomal subunit. Interacts with proteins S7 and S18. Binds to IF-3.

Functionally, located on the platform of the 30S subunit, it bridges several disparate RNA helices of the 16S rRNA. Forms part of the Shine-Dalgarno cleft in the 70S ribosome. The protein is Small ribosomal subunit protein uS11 of Wigglesworthia glossinidia brevipalpis.